The chain runs to 358 residues: Alternative oxidase, mitochondrial (358 aa).

The helical transmembrane segment at Leu-152 to Leu-172 threads the bilayer. The Fe cation site is built by Glu-159, Glu-198, and His-201. The chain crosses the membrane as a helical span at residues Phe-217 to Ser-237. Residues Glu-249, Glu-250, Glu-306, and His-309 each coordinate Fe cation.

This sequence belongs to the alternative oxidase family. Fe cation is required as a cofactor.

It localises to the mitochondrion inner membrane. Its function is as follows. Catalyzes cyanide-resistant oxygen consumption. May increase respiration when the cytochrome respiratory pathway is restricted, or in response to low temperatures. The protein is Alternative oxidase, mitochondrial of Blumeria graminis (Powdery mildew).